We begin with the raw amino-acid sequence, 263 residues long: Lens fiber major intrinsic protein (263 aa).

Residues 1-9 (MWELRSASF) lie on the Cytoplasmic side of the membrane. Residues 10–29 (WRAIFAEFFATLFYVFFGLG) form a helical membrane-spanning segment. Residues 30 to 41 (ASLRWAPGPLHV) are Extracellular-facing. A helical transmembrane segment spans residues 42–59 (LQVALAFGLALATLVQAV). At 60–61 (GH) the chain is on the cytoplasmic side. Positions 62–77 (ISGAHVNPAVTFAFLV) form an intramembrane region, discontinuously helical. The short motif at 68–70 (NPA) is the NPA 1 element. The Cytoplasmic segment spans residues 78–82 (GSQMS). The helical transmembrane segment at 83–106 (LLRAICYMAAQLLGAVAGAAVLYS) threads the bilayer. At 107 to 127 (VTPAAVRGNLALNTLHPGVSL) the chain is on the extracellular side. A helical membrane pass occupies residues 128 to 148 (GQATTVEIFLTLQFVLCIFAT). The Cytoplasmic portion of the chain corresponds to 149 to 156 (YDERRNGR). A helical membrane pass occupies residues 157–175 (LGSVALAVGFSLTLGHLFG). Residues 176 to 178 (MYY) are Extracellular-facing. The segment at residues 179–193 (TGAGMNPARSFAPAI) is an intramembrane region (discontinuously helical). The NPA 2 motif lies at 184–186 (NPA). Residues 194 to 200 (LTRNFTN) are Extracellular-facing. The chain crosses the membrane as a helical span at residues 201–222 (HWVYWVGPIIGGGLASLLYDFL). The Cytoplasmic segment spans residues 223-263 (LFPRLKSVSERLSILKGARPSDSNGQPEGTGEPVELKTQAL). Positions 227–237 (LKSVSERLSIL) are interaction with CALM. Phosphoserine occurs at positions 235, 243, and 245. Residues 240 to 263 (ARPSDSNGQPEGTGEPVELKTQAL) form a disordered region. At Asn246 the chain carries Deamidated asparagine.

This sequence belongs to the MIP/aquaporin (TC 1.A.8) family. Homotetramer; each monomer provides an independent water pore. Two homotetramers on opposing membranes can dimerize, forming a cell-cell junction. Interacts with CALM; the calcium-calmodulin/CALM complex interacts with the cytoplasmic domains of two aquaporins, leading to channel closure. Interacts with BFSP1 (via C-terminus); prevents calcium-dependent inhibition of the water channel activity. In terms of processing, subject to partial proteolytic cleavage in the eye lens core. Partial proteolysis promotes interactions between tetramers from adjoining membranes. Fatty acylated at Met-1 and Lys-238. The acyl modifications, in decreasing order of ion abundance, are: oleoyl (C18:1) &gt; palmitoyl (C16:0) &gt; stearoyl (C18:0) &gt; eicosenoyl (C20:1) &gt; dihomo-gamma-linolenoyl (C20:3) &gt; palmitoleoyl (C16:1) &gt; eicosadienoyl (C20:2).

It is found in the cell membrane. The protein localises to the cell junction. The catalysed reaction is H2O(in) = H2O(out). Its activity is regulated as follows. The water channel activity is inhibited by calcium through calmodulin/CALM. Aquaporins form homotetrameric transmembrane channels, with each monomer independently mediating water transport across the plasma membrane along its osmotic gradient. Specifically expressed in lens fiber cells, this aquaporin is crucial for maintaining lens water homeostasis and transparency. Beyond water permeability, it also acts as a cell-to-cell adhesion molecule, forming thin junctions between lens fiber cells that are essential for maintaining the ordered structure and transparency of the lens. This is Lens fiber major intrinsic protein from Oryctolagus cuniculus (Rabbit).